Here is a 1013-residue protein sequence, read N- to C-terminus: MLRELGRTATVKAHGRSVLRPVRGPAGRRQVAFTGVRPSVRVFAEAPAAEQAAKAIKLEDVKEGSEYEGTVTTVEEFGAFVNFGANTNGLVHISKLASGFTKNAKDVVQPGQKVTVKVLSVDAEKKRVSLELKSAVAAEASAEESDDIITEPDREGADATDDDEDVEVELEDGQVEVRADLPGFEDIPFVMEEADMDAEMSEAAIAALEADLDGAEIRYELEAPAYMEEVTGKVARIEDYGVFLEFEWNGKTLTGLLAKDEMKVPSSALSAEAQAALRAEWADTGFEMPAFVELPDDELDVKKYYQPGESVPAFVLESSLVDGRGISLTHFTDEEVSAEAVAAYEELEDDEDEELDKMMADAAGLEDEVLAFDPEALMEEDEGEEAGAAADAGDDAEYEGVSADGLEGANGNYALGATRSGLIKGKNGYQVAPMGLPSRPLNDAVTSSGLAILGTSEVDFDGDEVQLVDYWTSEAFDNIPKDVLKKLGLKMSYTEAGEAEFEERADFEATDVPFYLYGGDVESRAKEFVADLLSDDVDEAELPARAGRAPIVLAAAVQNISAAEVKALREKTGAGMMDCKKALAECAGDAEAAAEWLRKKGLSGADKKAGRIAAEGAVARYIHPGSRLGVLLEVNCETDFVAASEKFQALVNELGMIIAATDCICVSPEDVPEEVLAKEREVEMGKEDLANKPEAIRAKIVEGRLQKMRDQVALTNQATLSNPDKTVAELVKETIAAVGENVKIRRFIKYRLGEGLEKKANDFAAEVAQQTQAKAAAPAAPKKEEPKKEEPKKATVAVSAGTVKELRDKTGAGMMDCKKALAENENDMEKATEWLRMKGLAGADKKAGRIAAEGVVASYIHPGSRLGVLLEVNCETDFVAASEKFNELVNYIAMGIVAGQNVQYVSADEIPAEVFEREKQLEMARDDLKGKPDAIRAKIAEGRAKKIATEMCLLDQPFLTDPSKTVAEAIKESIAAIGEKISVRRFVKFQLGEGLEKKSNDFAAEVAAATGAK.

The transit peptide at 1–43 (MLRELGRTATVKAHGRSVLRPVRGPAGRRQVAFTGVRPSVRVF) directs the protein to the chloroplast. Positions 64-133 (GSEYEGTVTT…EKKRVSLELK (70 aa)) constitute an S1 motif 1 domain. Residues 141-150 (SAEESDDIIT) are compositionally biased toward acidic residues. A disordered region spans residues 141-163 (SAEESDDIITEPDREGADATDDD). Positions 227-331 (MEEVTGKVAR…DGRGISLTHF (105 aa)) constitute an S1 motif 2 domain. The disordered stretch occupies residues 772–798 (QAKAAAPAAPKKEEPKKEEPKKATVAV). Over residues 781–793 (PKKEEPKKEEPKK) the composition is skewed to basic and acidic residues.

It belongs to the EF-Ts family. In terms of assembly, component of the chloroplast ribosome 30S and 70S subunits, as well as polysomes. Component of the chloroplast ribosome 70S subunit, and at low levels, present in polysomes. As to quaternary structure, associates transiently with chloroplast polysomes.

Its subcellular location is the plastid. The protein resides in the chloroplast. Functionally, associates with the EF-Tu.GDP complex and induces the exchange of GDP to GTP. It remains bound to the aminoacyl-tRNA.EF-Tu.GTP complex up to the GTP hydrolysis stage on the ribosome. Its function is as follows. Binds to psbD and psbA mRNAs 5'-untranslated regions (UTRs) in vitro. This Chlamydomonas reinhardtii (Chlamydomonas smithii) protein is Polyprotein of EF-Ts, chloroplastic.